Reading from the N-terminus, the 186-residue chain is MSFLTNFLLGLGLAMDAFAVSMSSGTTVRPFKVSDALKLAVFFGGFQALMPVLGWVGGSAVSGFVSDYAPWIAFGLLAFIGGKMIYEALYGDPDGKVNSLNYSMLFLLAVATSIDALAVGISFAFLGTPILEPVIIIGCVTFVMSFCGAVLGYRIGHFFENEVEILGGLILIGLGVKILAEHMDWI.

The next 6 membrane-spanning stretches (helical) occupy residues 1–21 (MSFL…FAVS), 41–61 (VFFG…GSAV), 62–82 (SGFV…FIGG), 105–127 (LFLL…AFLG), 139–159 (CVTF…GHFF), and 163–183 (VEIL…AEHM).

The protein belongs to the MntP (TC 9.B.29) family.

The protein localises to the cell membrane. Functionally, probably functions as a manganese efflux pump. This Methanosarcina mazei (strain ATCC BAA-159 / DSM 3647 / Goe1 / Go1 / JCM 11833 / OCM 88) (Methanosarcina frisia) protein is Putative manganese efflux pump MntP.